We begin with the raw amino-acid sequence, 81 residues long: Putative membrane protein insertion efficiency factor (81 aa).

This sequence belongs to the UPF0161 family.

The protein localises to the cell inner membrane. Could be involved in insertion of integral membrane proteins into the membrane. This is Putative membrane protein insertion efficiency factor from Legionella pneumophila subsp. pneumophila (strain Philadelphia 1 / ATCC 33152 / DSM 7513).